The following is a 515-amino-acid chain: Bifunctional purine biosynthesis protein PurH (515 aa).

The region spanning 1 to 145 is the MGS-like domain; that stretch reads MTKRVLISVS…KNHASVTVVV (145 aa).

It belongs to the PurH family.

It carries out the reaction (6R)-10-formyltetrahydrofolate + 5-amino-1-(5-phospho-beta-D-ribosyl)imidazole-4-carboxamide = 5-formamido-1-(5-phospho-D-ribosyl)imidazole-4-carboxamide + (6S)-5,6,7,8-tetrahydrofolate. The enzyme catalyses IMP + H2O = 5-formamido-1-(5-phospho-D-ribosyl)imidazole-4-carboxamide. Its pathway is purine metabolism; IMP biosynthesis via de novo pathway; 5-formamido-1-(5-phospho-D-ribosyl)imidazole-4-carboxamide from 5-amino-1-(5-phospho-D-ribosyl)imidazole-4-carboxamide (10-formyl THF route): step 1/1. It participates in purine metabolism; IMP biosynthesis via de novo pathway; IMP from 5-formamido-1-(5-phospho-D-ribosyl)imidazole-4-carboxamide: step 1/1. The sequence is that of Bifunctional purine biosynthesis protein PurH from Streptococcus pneumoniae (strain JJA).